The primary structure comprises 205 residues: uncharacterized protein (205 aa).

A run of 5 helical transmembrane segments spans residues 5 to 25 (VWLA…SGTV), 41 to 61 (GAII…GIGI), 68 to 88 (SALA…WLGI), 117 to 137 (LINL…PQFI), and 147 to 167 (FLVL…GYTA).

Belongs to the Rht family.

It localises to the cell inner membrane. Functionally, involved in positive regulation of motility and negative regulation of biofilm formation. This is an uncharacterized protein from Vibrio cholerae serotype O1 (strain ATCC 39315 / El Tor Inaba N16961).